Consider the following 340-residue polypeptide: Guanine nucleotide-binding protein G(I)/G(S)/G(T) subunit beta-3 (340 aa).

WD repeat units lie at residues 53–83, 95–125, 141–170, 182–212, 224–254, 268–298, and 310–340; these read GHLA…IVWD, LRSS…SIYN, AHTG…ALWD, GHTG…KLWD, GHES…RLFD, SIIC…NVWD, and GHDN…KIWN.

This sequence belongs to the WD repeat G protein beta family. G proteins are composed of 3 units, alpha, beta and gamma. Interacts with RASD2.

Functionally, guanine nucleotide-binding proteins (G proteins) are involved as a modulator or transducer in various transmembrane signaling systems. The beta and gamma chains are required for the GTPase activity, for replacement of GDP by GTP, and for G protein-effector interaction. This is Guanine nucleotide-binding protein G(I)/G(S)/G(T) subunit beta-3 (GNB3) from Homo sapiens (Human).